The following is a 55-amino-acid chain: Large ribosomal subunit protein bL33 (55 aa).

The protein belongs to the bacterial ribosomal protein bL33 family.

The sequence is that of Large ribosomal subunit protein bL33 (rpmG) from Nitrobacter hamburgensis (strain DSM 10229 / NCIMB 13809 / X14).